Consider the following 201-residue polypeptide: UPF0301 protein Bpet0561 (201 aa).

The protein belongs to the UPF0301 (AlgH) family.

This chain is UPF0301 protein Bpet0561, found in Bordetella petrii (strain ATCC BAA-461 / DSM 12804 / CCUG 43448).